The chain runs to 1028 residues: Isoleucine--tRNA ligase (1028 aa).

Residues 51-61 (PTANGRPHIGH) carry the 'HIGH' region motif. Residues 591 to 595 (KMSKS) carry the 'KMSKS' region motif. Position 594 (Lys-594) interacts with ATP.

The protein belongs to the class-I aminoacyl-tRNA synthetase family. IleS type 2 subfamily. As to quaternary structure, monomer. The cofactor is Zn(2+).

It localises to the cytoplasm. It carries out the reaction tRNA(Ile) + L-isoleucine + ATP = L-isoleucyl-tRNA(Ile) + AMP + diphosphate. Its function is as follows. Catalyzes the attachment of isoleucine to tRNA(Ile). As IleRS can inadvertently accommodate and process structurally similar amino acids such as valine, to avoid such errors it has two additional distinct tRNA(Ile)-dependent editing activities. One activity is designated as 'pretransfer' editing and involves the hydrolysis of activated Val-AMP. The other activity is designated 'posttransfer' editing and involves deacylation of mischarged Val-tRNA(Ile). This Thermoplasma volcanium (strain ATCC 51530 / DSM 4299 / JCM 9571 / NBRC 15438 / GSS1) protein is Isoleucine--tRNA ligase.